Consider the following 174-residue polypeptide: Flavodoxin (174 aa).

The 163-residue stretch at 4-166 (IGIFFGSDTG…RIIQWTKKIK (163 aa)) folds into the Flavodoxin-like domain.

The protein belongs to the flavodoxin family. FMN serves as cofactor.

Functionally, low-potential electron donor to a number of redox enzymes. This chain is Flavodoxin (fldA), found in Buchnera aphidicola subsp. Baizongia pistaciae (strain Bp).